A 463-amino-acid chain; its full sequence is Glycine--tRNA ligase (463 aa).

Residues arginine 98 and glutamate 174 each coordinate substrate. ATP contacts are provided by residues 206 to 208 (RNE), 216 to 221 (FRTREF), 290 to 291 (EL), and 334 to 337 (GADR). 221-225 (FEQME) contributes to the substrate binding site. 330 to 334 (EPSLG) lines the substrate pocket.

It belongs to the class-II aminoacyl-tRNA synthetase family. Homodimer.

It localises to the cytoplasm. It catalyses the reaction tRNA(Gly) + glycine + ATP = glycyl-tRNA(Gly) + AMP + diphosphate. Catalyzes the attachment of glycine to tRNA(Gly). The chain is Glycine--tRNA ligase from Staphylococcus aureus (strain Mu50 / ATCC 700699).